Consider the following 379-residue polypeptide: UDP-4-amino-4-deoxy-L-arabinose--oxoglutarate aminotransferase (379 aa).

At K182 the chain carries N6-(pyridoxal phosphate)lysine.

Belongs to the DegT/DnrJ/EryC1 family. ArnB subfamily. Homodimer. Requires pyridoxal 5'-phosphate as cofactor.

The enzyme catalyses UDP-4-amino-4-deoxy-beta-L-arabinose + 2-oxoglutarate = UDP-beta-L-threo-pentopyranos-4-ulose + L-glutamate. Its pathway is nucleotide-sugar biosynthesis; UDP-4-deoxy-4-formamido-beta-L-arabinose biosynthesis; UDP-4-deoxy-4-formamido-beta-L-arabinose from UDP-alpha-D-glucuronate: step 2/3. It functions in the pathway bacterial outer membrane biogenesis; lipopolysaccharide biosynthesis. Its function is as follows. Catalyzes the conversion of UDP-4-keto-arabinose (UDP-Ara4O) to UDP-4-amino-4-deoxy-L-arabinose (UDP-L-Ara4N). The modified arabinose is attached to lipid A and is required for resistance to polymyxin and cationic antimicrobial peptides. The polypeptide is UDP-4-amino-4-deoxy-L-arabinose--oxoglutarate aminotransferase (Sodalis glossinidius (strain morsitans)).